Consider the following 495-residue polypeptide: Protein nucleotidyltransferase YdiU (495 aa).

ATP is bound by residues Gly92, Gly94, Arg95, Lys114, Asp126, Gly127, Arg177, and Arg184. Asp261 (proton acceptor) is an active-site residue. 2 residues coordinate Mg(2+): Asn262 and Asp271. Position 271 (Asp271) interacts with ATP.

This sequence belongs to the SELO family. Mg(2+) is required as a cofactor. The cofactor is Mn(2+).

The enzyme catalyses L-seryl-[protein] + ATP = 3-O-(5'-adenylyl)-L-seryl-[protein] + diphosphate. The catalysed reaction is L-threonyl-[protein] + ATP = 3-O-(5'-adenylyl)-L-threonyl-[protein] + diphosphate. It carries out the reaction L-tyrosyl-[protein] + ATP = O-(5'-adenylyl)-L-tyrosyl-[protein] + diphosphate. It catalyses the reaction L-histidyl-[protein] + UTP = N(tele)-(5'-uridylyl)-L-histidyl-[protein] + diphosphate. The enzyme catalyses L-seryl-[protein] + UTP = O-(5'-uridylyl)-L-seryl-[protein] + diphosphate. The catalysed reaction is L-tyrosyl-[protein] + UTP = O-(5'-uridylyl)-L-tyrosyl-[protein] + diphosphate. Nucleotidyltransferase involved in the post-translational modification of proteins. It can catalyze the addition of adenosine monophosphate (AMP) or uridine monophosphate (UMP) to a protein, resulting in modifications known as AMPylation and UMPylation. This Bordetella bronchiseptica (strain ATCC BAA-588 / NCTC 13252 / RB50) (Alcaligenes bronchisepticus) protein is Protein nucleotidyltransferase YdiU.